We begin with the raw amino-acid sequence, 290 residues long: Light-independent protochlorophyllide reductase iron-sulfur ATP-binding protein (290 aa).

Residues 10 to 15 (GIGKST) and Lys-39 contribute to the ATP site. Ser-14 is a binding site for Mg(2+). [4Fe-4S] cluster contacts are provided by Cys-95 and Cys-129. Position 180-181 (180-181 (NR)) interacts with ATP.

This sequence belongs to the NifH/BchL/ChlL family. Homodimer. Protochlorophyllide reductase is composed of three subunits; ChlL, ChlN and ChlB. [4Fe-4S] cluster serves as cofactor.

It is found in the plastid. The protein resides in the chloroplast. The catalysed reaction is chlorophyllide a + oxidized 2[4Fe-4S]-[ferredoxin] + 2 ADP + 2 phosphate = protochlorophyllide a + reduced 2[4Fe-4S]-[ferredoxin] + 2 ATP + 2 H2O. Its pathway is porphyrin-containing compound metabolism; chlorophyll biosynthesis (light-independent). Component of the dark-operative protochlorophyllide reductase (DPOR) that uses Mg-ATP and reduced ferredoxin to reduce ring D of protochlorophyllide (Pchlide) to form chlorophyllide a (Chlide). This reaction is light-independent. The L component serves as a unique electron donor to the NB-component of the complex, and binds Mg-ATP. In Anthoceros angustus (Hornwort), this protein is Light-independent protochlorophyllide reductase iron-sulfur ATP-binding protein.